The sequence spans 318 residues: Ribose-phosphate pyrophosphokinase 1 (318 aa).

96 to 101 is an ATP binding site; it reads RQDKKD. Mg(2+) contacts are provided by Asp-128, His-130, Asp-139, and Asp-143. Residue His-130 coordinates ATP. The tract at residues 212–227 is binding of phosphoribosylpyrophosphate; that stretch reads KDRVAILVDDMADTCG.

The protein belongs to the ribose-phosphate pyrophosphokinase family. As to quaternary structure, homodimer. The active form is probably a hexamer composed of 3 homodimers. Mg(2+) serves as cofactor.

The enzyme catalyses D-ribose 5-phosphate + ATP = 5-phospho-alpha-D-ribose 1-diphosphate + AMP + H(+). It functions in the pathway metabolic intermediate biosynthesis; 5-phospho-alpha-D-ribose 1-diphosphate biosynthesis; 5-phospho-alpha-D-ribose 1-diphosphate from D-ribose 5-phosphate (route I): step 1/1. With respect to regulation, activated by magnesium and inorganic phosphate. Functionally, catalyzes the synthesis of phosphoribosylpyrophosphate (PRPP) that is essential for nucleotide synthesis. The protein is Ribose-phosphate pyrophosphokinase 1 (PRPS1) of Bos taurus (Bovine).